A 103-amino-acid chain; its full sequence is Small ribosomal subunit protein uS10 (103 aa).

The protein belongs to the universal ribosomal protein uS10 family. As to quaternary structure, part of the 30S ribosomal subunit.

Functionally, involved in the binding of tRNA to the ribosomes. This chain is Small ribosomal subunit protein uS10, found in Desulfatibacillum aliphaticivorans.